Here is a 160-residue protein sequence, read N- to C-terminus: SsrA-binding protein (160 aa).

This sequence belongs to the SmpB family.

The protein resides in the cytoplasm. In terms of biological role, required for rescue of stalled ribosomes mediated by trans-translation. Binds to transfer-messenger RNA (tmRNA), required for stable association of tmRNA with ribosomes. tmRNA and SmpB together mimic tRNA shape, replacing the anticodon stem-loop with SmpB. tmRNA is encoded by the ssrA gene; the 2 termini fold to resemble tRNA(Ala) and it encodes a 'tag peptide', a short internal open reading frame. During trans-translation Ala-aminoacylated tmRNA acts like a tRNA, entering the A-site of stalled ribosomes, displacing the stalled mRNA. The ribosome then switches to translate the ORF on the tmRNA; the nascent peptide is terminated with the 'tag peptide' encoded by the tmRNA and targeted for degradation. The ribosome is freed to recommence translation, which seems to be the essential function of trans-translation. This Dinoroseobacter shibae (strain DSM 16493 / NCIMB 14021 / DFL 12) protein is SsrA-binding protein.